The sequence spans 963 residues: MEQERIMQRVQKDVRSLLIASKNGLSIQELEQDYRMMIGSQIPLRSLGYKSTMELLLDMPNVVQIHTQMDGTVNLSAVVDEATRKIADLVSCQKDRSTARSRNRRRNIRPRCPVDLVRRGRVSPVLPATVKSDLRDLLSLSPLLLSELEKAFFSRFGRSFQYTRYGFYSMLEVLRSISDIVEVKQTRTGSLLVLRKSETGHISASLCVKKSLDCQPAAVPNKTSCVFEKCLNEPQRPEKKPSEPATSLKISPPEFQKFSSQEPQSITSSRSFLHSSSNKEPDVNRNVSLGESKKSIENKTSPAVPSNNVVLNNSLVKNSETFESLFTRMSKPVSHVEADHANASEPNSSDLNWLEKKLEKELKLCLARKGAGGSVSDDLRSDIKHVVNQHSNGLNISLLPTAFKSFTGKDLPFKELGFMSVMELVGSLGDILCLESTDEGKDWKLFGAKKEDLVDEFSAGLRSTNSSLSSWNSTRQSTAPLKPVGTIFSKVDEKLWWGPLELKVCSTEQIDIPPDAVRNQKLHCLPRIKHSLMIGVYVESIESPSQFYVRCCGKDTSEKLEDMMIEMRHCYSNECVSERYIVPDNCISVGQIYALRVPGDVWWYRVIVHSIKNSELLDVFYPDFGNVATVKKSWLRFLKNCYMKVPAQAVPSSLPFVTSTEAQWSTQAIKRFRQLCSCLPLVGLVLQYVQDVLVIFLCDTSSAEDVYLHQLLIAQGLAKMEPEHACKKVSRNTFMHYLTPSQEKPQEESSKSSVPSESSQSEVLCTKETILQVIDEVDPEMPYLEAFPTDTDVWDENWVFSDGAGGSNTTPTIPKVETQKQENKISKEQKQPFKFCMDSGDASVVHRPLEEFYISLIKSSKSQESTDIQQSSHTEEQHLAEKSHRCTAEQLQGGSSSSMLCEKKLYYENKDLTYCQQQSKCSFSPLIGFQKLQIPRSATPAALGPAARLATAGRLLYWASDSH.

HTH OST-type domains lie at Ile6–Val79 and Val122–Ser197. The interval Asn232–Ser306 is disordered. Residues Lys257–Ser276 show a composition bias toward polar residues. One can recognise an HTH OST-type 3 domain in the interval Val375–Lys449. The 60-residue stretch at Cys586–Val645 folds into the Tudor domain. Disordered stretches follow at residues Thr739–Val763, Gly803–Glu822, and Glu864–Leu891. Over residues Lys751–Val763 the composition is skewed to low complexity. Residues His873–Thr887 are compositionally biased toward basic and acidic residues.

It belongs to the TDRD5 family.

Its subcellular location is the cytoplasm. Required during spermiogenesis to participate in the repression transposable elements and prevent their mobilization, which is essential for the germline integrity. Probably acts via the piRNA metabolic process, which mediates the repression of transposable elements during meiosis by forming complexes composed of piRNAs and Piwi proteins and govern the methylation and subsequent repression of transposons. In Xenopus laevis (African clawed frog), this protein is Tudor domain-containing protein 5 (tdrd5).